Reading from the N-terminus, the 753-residue chain is Probable dipeptidyl peptidase 4 (753 aa).

Positions 1-18 (MKTSQFLSLLLLAGIAQA) are cleaved as a signal peptide. 3 N-linked (GlcNAc...) asparagine glycosylation sites follow: Asn84, Asn114, and Asn222. Active-site charge relay system residues include Ser616, Asp668, and His703.

Belongs to the peptidase S9B family.

The protein localises to the secreted. It carries out the reaction Release of an N-terminal dipeptide, Xaa-Yaa-|-Zaa-, from a polypeptide, preferentially when Yaa is Pro, provided Zaa is neither Pro nor hydroxyproline.. Functionally, extracellular dipeptidyl-peptidase which removes N-terminal dipeptides sequentially from polypeptides having unsubstituted N-termini provided that the penultimate residue is proline. Contributes to pathogenicity. The protein is Probable dipeptidyl peptidase 4 (DPP4) of Trichophyton verrucosum (strain HKI 0517).